Consider the following 289-residue polypeptide: Nucleotide-binding protein LAF_0356 (289 aa).

Residue 12–19 (GMSGAGKT) participates in ATP binding. Position 62–65 (62–65 (DSRS)) interacts with GTP.

Belongs to the RapZ-like family.

Functionally, displays ATPase and GTPase activities. This is Nucleotide-binding protein LAF_0356 from Limosilactobacillus fermentum (strain NBRC 3956 / LMG 18251) (Lactobacillus fermentum).